The chain runs to 362 residues: Phosphoserine aminotransferase (362 aa).

L-glutamate contacts are provided by serine 9 and arginine 42. Pyridoxal 5'-phosphate contacts are provided by residues 76–77 (GR), tryptophan 102, threonine 153, aspartate 174, and glutamine 197. At lysine 198 the chain carries N6-(pyridoxal phosphate)lysine. Residue 239-240 (NT) coordinates pyridoxal 5'-phosphate.

It belongs to the class-V pyridoxal-phosphate-dependent aminotransferase family. SerC subfamily. As to quaternary structure, homodimer. Pyridoxal 5'-phosphate is required as a cofactor.

It localises to the cytoplasm. The catalysed reaction is O-phospho-L-serine + 2-oxoglutarate = 3-phosphooxypyruvate + L-glutamate. The enzyme catalyses 4-(phosphooxy)-L-threonine + 2-oxoglutarate = (R)-3-hydroxy-2-oxo-4-phosphooxybutanoate + L-glutamate. Its pathway is amino-acid biosynthesis; L-serine biosynthesis; L-serine from 3-phospho-D-glycerate: step 2/3. It functions in the pathway cofactor biosynthesis; pyridoxine 5'-phosphate biosynthesis; pyridoxine 5'-phosphate from D-erythrose 4-phosphate: step 3/5. Functionally, catalyzes the reversible conversion of 3-phosphohydroxypyruvate to phosphoserine and of 3-hydroxy-2-oxo-4-phosphonooxybutanoate to phosphohydroxythreonine. The chain is Phosphoserine aminotransferase from Klebsiella pneumoniae subsp. pneumoniae (strain ATCC 700721 / MGH 78578).